Here is a 288-residue protein sequence, read N- to C-terminus: Nucleotide-binding protein Neut_1559 (288 aa).

Residue 8–15 (GLSGSGKS) coordinates ATP. 57 to 60 (DMRS) is a binding site for GTP.

This sequence belongs to the RapZ-like family.

Functionally, displays ATPase and GTPase activities. In Nitrosomonas eutropha (strain DSM 101675 / C91 / Nm57), this protein is Nucleotide-binding protein Neut_1559.